The sequence spans 270 residues: Phosphatidylglycerol--prolipoprotein diacylglyceryl transferase (270 aa).

4 consecutive transmembrane segments (helical) span residues 19 to 39 (FPVYWYGIIIGTGVLLGLWLA), 56 to 76 (LVLIAVPIAILFARMYYVIFE), 92 to 112 (QGGLAIHGGLIGAVITGILFA), and 116 to 136 (GVSFWKLADIAAPSILLGQAI). Arg-138 provides a ligand contact to a 1,2-diacyl-sn-glycero-3-phospho-(1'-sn-glycerol). 3 consecutive transmembrane segments (helical) span residues 178 to 198 (HPTFLYESLWNFAGVILLLAL), 206 to 226 (GELFFTYLIWYSIGRFFVEGL), and 236 to 256 (LRIAQVMSIGLVVISIIFIIV).

It belongs to the Lgt family.

The protein localises to the cell membrane. The enzyme catalyses L-cysteinyl-[prolipoprotein] + a 1,2-diacyl-sn-glycero-3-phospho-(1'-sn-glycerol) = an S-1,2-diacyl-sn-glyceryl-L-cysteinyl-[prolipoprotein] + sn-glycerol 1-phosphate + H(+). The protein operates within protein modification; lipoprotein biosynthesis (diacylglyceryl transfer). Its function is as follows. Catalyzes the transfer of the diacylglyceryl group from phosphatidylglycerol to the sulfhydryl group of the N-terminal cysteine of a prolipoprotein, the first step in the formation of mature lipoproteins. The chain is Phosphatidylglycerol--prolipoprotein diacylglyceryl transferase from Bacillus thuringiensis subsp. konkukian (strain 97-27).